Consider the following 139-residue polypeptide: Large ribosomal subunit protein uL16 (139 aa).

Belongs to the universal ribosomal protein uL16 family. Part of the 50S ribosomal subunit.

In terms of biological role, binds 23S rRNA and is also seen to make contacts with the A and possibly P site tRNAs. This chain is Large ribosomal subunit protein uL16, found in Crocosphaera subtropica (strain ATCC 51142 / BH68) (Cyanothece sp. (strain ATCC 51142)).